Consider the following 137-residue polypeptide: Small ribosomal subunit protein uS12 (137 aa).

A disordered region spans residues 1–57 (MPTINQLVRKPRKSKVEKPKSPALNVGYNSHKKVQTNVSSPQKRGVATRVGTMTPRK). Asp102 carries the post-translational modification 3-methylthioaspartic acid.

This sequence belongs to the universal ribosomal protein uS12 family. Part of the 30S ribosomal subunit. Contacts proteins S8 and S17. May interact with IF1 in the 30S initiation complex.

Its function is as follows. With S4 and S5 plays an important role in translational accuracy. In terms of biological role, interacts with and stabilizes bases of the 16S rRNA that are involved in tRNA selection in the A site and with the mRNA backbone. Located at the interface of the 30S and 50S subunits, it traverses the body of the 30S subunit contacting proteins on the other side and probably holding the rRNA structure together. The combined cluster of proteins S8, S12 and S17 appears to hold together the shoulder and platform of the 30S subunit. The chain is Small ribosomal subunit protein uS12 from Streptococcus pneumoniae (strain Hungary19A-6).